Reading from the N-terminus, the 317-residue chain is Olfactory receptor 2G2 (317 aa).

Residues 1–28 (MGMVRHTNESNLAGFILLGFSDYPQLQK) are Extracellular-facing. N8 carries an N-linked (GlcNAc...) asparagine glycan. The helical transmembrane segment at 29-52 (VLFVLILILYLLTILGNTTIILVS) threads the bilayer. Residues 53-60 (RLEPKLHM) lie on the Cytoplasmic side of the membrane. A helical transmembrane segment spans residues 61–82 (PMYFFLSHLSFLYRCFTSSVIP). Residues 83-103 (QLLVNLWEPMKTIAYGGCLVH) are Extracellular-facing. Cysteines 100 and 192 form a disulfide. A helical transmembrane segment spans residues 104-123 (LYNSHALGSTECVLPAVMSC). Topologically, residues 124 to 142 (DRYVAVCRPLHYTVLMHIH) are cytoplasmic. Residues 143-161 (LCMALASMAWLSGIATTLV) traverse the membrane as a helical segment. Over 162-198 (QSTLTLQLPFCGHRQVDHFICEVPVLIKLACVGTTFN) the chain is Extracellular. A helical transmembrane segment spans residues 199–222 (EAELFVASILFLIVPVSFILVSSG). Topologically, residues 223 to 239 (YIAHAVLRIKSATRRQK) are cytoplasmic. Residues 240–262 (AFGTCFSHLTVVTIFYGTIIFMY) traverse the membrane as a helical segment. Residues 263–275 (LQPAKSRSRDQGK) are Extracellular-facing. A helical transmembrane segment spans residues 276–295 (FVSLFYTVVTRMLNPLIYTL). Residues 296-317 (RIKEVKGALKKVLAKALGVNIL) are Cytoplasmic-facing.

Belongs to the G-protein coupled receptor 1 family.

Its subcellular location is the cell membrane. Its function is as follows. Odorant receptor. The sequence is that of Olfactory receptor 2G2 (OR2G2) from Homo sapiens (Human).